Consider the following 345-residue polypeptide: Dihydroorotase (345 aa).

His-13 and His-15 together coordinate Zn(2+). Residues 15–17 (HFR) and Asn-41 each bind substrate. Residues Lys-98, His-135, and His-173 each contribute to the Zn(2+) site. N6-carboxylysine is present on Lys-98. His-135 contacts substrate. Leu-218 is a substrate binding site. Residue Asp-246 coordinates Zn(2+). Residue Asp-246 is part of the active site. Substrate-binding residues include His-250 and Ala-262.

It belongs to the metallo-dependent hydrolases superfamily. DHOase family. Class II DHOase subfamily. In terms of assembly, homodimer. Requires Zn(2+) as cofactor.

It carries out the reaction (S)-dihydroorotate + H2O = N-carbamoyl-L-aspartate + H(+). Its pathway is pyrimidine metabolism; UMP biosynthesis via de novo pathway; (S)-dihydroorotate from bicarbonate: step 3/3. Functionally, catalyzes the reversible cyclization of carbamoyl aspartate to dihydroorotate. The polypeptide is Dihydroorotase (Shewanella piezotolerans (strain WP3 / JCM 13877)).